Reading from the N-terminus, the 307-residue chain is Ornithine carbamoyltransferase (307 aa).

Residues 50-53 (STRT), glutamine 77, arginine 101, and 128-131 (HPCQ) each bind carbamoyl phosphate. Residues asparagine 160, aspartate 224, and 228–229 (SM) each bind L-ornithine. Carbamoyl phosphate contacts are provided by residues 264–265 (CL) and arginine 292.

Belongs to the aspartate/ornithine carbamoyltransferase superfamily. OTCase family.

It localises to the cytoplasm. It catalyses the reaction carbamoyl phosphate + L-ornithine = L-citrulline + phosphate + H(+). The protein operates within amino-acid biosynthesis; L-arginine biosynthesis; L-arginine from L-ornithine and carbamoyl phosphate: step 1/3. Reversibly catalyzes the transfer of the carbamoyl group from carbamoyl phosphate (CP) to the N(epsilon) atom of ornithine (ORN) to produce L-citrulline. The polypeptide is Ornithine carbamoyltransferase (Clavibacter michiganensis subsp. michiganensis (strain NCPPB 382)).